A 181-amino-acid chain; its full sequence is CDP-diacylglycerol--glycerol-3-phosphate 3-phosphatidyltransferase (181 aa).

The next 4 membrane-spanning stretches (helical) occupy residues 8-28 (PNYL…LFYI), 35-55 (KLGA…GYIA), 64-84 (FGKM…TIML), and 148-168 (IIYL…LTII).

Belongs to the CDP-alcohol phosphatidyltransferase class-I family.

The protein localises to the cell membrane. It catalyses the reaction a CDP-1,2-diacyl-sn-glycerol + sn-glycerol 3-phosphate = a 1,2-diacyl-sn-glycero-3-phospho-(1'-sn-glycero-3'-phosphate) + CMP + H(+). It participates in phospholipid metabolism; phosphatidylglycerol biosynthesis; phosphatidylglycerol from CDP-diacylglycerol: step 1/2. In terms of biological role, this protein catalyzes the committed step to the synthesis of the acidic phospholipids. This is CDP-diacylglycerol--glycerol-3-phosphate 3-phosphatidyltransferase (pgsA) from Rickettsia prowazekii (strain Madrid E).